The primary structure comprises 294 residues: MKLGFVGAGRVGSTSAFTCLLNLDVDEIALVDIAEDLAVGEAMDLAHAAAGIDKYPKIVGGADYSLLKGSEIIVVTAGLARKPGMTRLDLAHKNAGIIKDIAKKIVENAPESKILVVTNPMDVMTYIMWKESGKPRNEVFGMGNQLDSQRLKERLYNAGARNIRRAWIIGEHGDSMFVAKSLADFDGEVDWEAVENDVRFVAAEVIKRKGATIFGPAVAIYRMVKAVVEDTGEIIPTSMILQGEYGIENVAVGVPAKLGKNGAEVADIKLSDEEIEKLRNSAKILRERLEELGY.

Residues G7–G12 and D32 each bind NAD(+). Substrate-binding residues include R81 and R87. NAD(+)-binding positions include N94 and V117 to N119. 2 residues coordinate substrate: N119 and R150. H172 serves as the catalytic Proton acceptor.

It belongs to the LDH/MDH superfamily. Homodimer.

The protein localises to the cytoplasm. It catalyses the reaction (S)-malate + NAD(+) = oxaloacetate + NADH + H(+). In terms of biological role, catalyzes the reversible oxidation of malate to oxaloacetate. Can also oxidize tartrate. This chain is Malate dehydrogenase (mdh), found in Archaeoglobus fulgidus (strain ATCC 49558 / DSM 4304 / JCM 9628 / NBRC 100126 / VC-16).